Reading from the N-terminus, the 293-residue chain is Nucleotide-binding protein BC_5156 (293 aa).

14–21 lines the ATP pocket; it reads GMSGAGKT. 65–68 is a binding site for GTP; the sequence is DLRG.

It belongs to the RapZ-like family.

Displays ATPase and GTPase activities. The chain is Nucleotide-binding protein BC_5156 from Bacillus cereus (strain ATCC 14579 / DSM 31 / CCUG 7414 / JCM 2152 / NBRC 15305 / NCIMB 9373 / NCTC 2599 / NRRL B-3711).